The following is a 39-amino-acid chain: Phosphate starvation-inducible protein 1 (39 aa).

It localises to the cell outer membrane. This chain is Phosphate starvation-inducible protein 1, found in Pseudomonas fluorescens.